The chain runs to 344 residues: Ferredoxin--NADP reductase (344 aa).

8 residues coordinate FAD: serine 12, aspartate 31, lysine 39, tyrosine 43, valine 83, isoleucine 118, aspartate 285, and serine 326.

Belongs to the ferredoxin--NADP reductase type 2 family. Homodimer. FAD serves as cofactor.

It carries out the reaction 2 reduced [2Fe-2S]-[ferredoxin] + NADP(+) + H(+) = 2 oxidized [2Fe-2S]-[ferredoxin] + NADPH. In Staphylococcus aureus (strain JH1), this protein is Ferredoxin--NADP reductase.